A 126-amino-acid chain; its full sequence is Small ribosomal subunit protein uS12 (126 aa).

A disordered region spans residues 1-28 (MPTINQLVRKGRRKVRTKSKSPALDGNP). Residues 9–19 (RKGRRKVRTKS) are compositionally biased toward basic residues. Aspartate 89 is modified (3-methylthioaspartic acid). Positions 106-126 (GVEKRRRSRSKYGVKRPKAAK) are disordered. The segment covering 109–126 (KRRRSRSKYGVKRPKAAK) has biased composition (basic residues).

The protein belongs to the universal ribosomal protein uS12 family. As to quaternary structure, part of the 30S ribosomal subunit. Contacts proteins S8 and S17. May interact with IF1 in the 30S initiation complex.

With S4 and S5 plays an important role in translational accuracy. In terms of biological role, interacts with and stabilizes bases of the 16S rRNA that are involved in tRNA selection in the A site and with the mRNA backbone. Located at the interface of the 30S and 50S subunits, it traverses the body of the 30S subunit contacting proteins on the other side and probably holding the rRNA structure together. The combined cluster of proteins S8, S12 and S17 appears to hold together the shoulder and platform of the 30S subunit. The chain is Small ribosomal subunit protein uS12 from Opitutus terrae (strain DSM 11246 / JCM 15787 / PB90-1).